A 576-amino-acid polypeptide reads, in one-letter code: Pentatricopeptide repeat-containing protein At1g79080, chloroplastic (576 aa).

Residues 1 to 37 (MSTLLNSVLSMASPESSPRKAVGFVSHIPSGFLHFSS) constitute a chloroplast transit peptide. PPR repeat units follow at residues 105-139 (NVAH…GIIP), 140-174 (DASA…GYPS), 175-209 (NTVT…GLAP), 210-244 (NAFT…GGEP), 245-279 (NLVS…GFKA), 280-314 (NVVS…DRAP), 315-349 (SVVT…NHQF), 352-386 (TATS…RCKP), 387-417 (NEGT…LSNK), 422-456 (THDF…GFDP), 457-487 (DAHT…MEES), 493-527 (TVDN…KRMP), and 528-562 (NETT…KVIG).

Belongs to the PPR family. P subfamily.

Its subcellular location is the plastid. The protein resides in the chloroplast. The polypeptide is Pentatricopeptide repeat-containing protein At1g79080, chloroplastic (Arabidopsis thaliana (Mouse-ear cress)).